Consider the following 405-residue polypeptide: Arginine biosynthesis bifunctional protein ArgJ (405 aa).

Substrate is bound by residues Thr167, Lys190, Thr201, Glu281, Asn400, and Ser405. Thr201 acts as the Nucleophile in catalysis.

The protein belongs to the ArgJ family. As to quaternary structure, heterotetramer of two alpha and two beta chains.

The protein localises to the cytoplasm. It carries out the reaction N(2)-acetyl-L-ornithine + L-glutamate = N-acetyl-L-glutamate + L-ornithine. The enzyme catalyses L-glutamate + acetyl-CoA = N-acetyl-L-glutamate + CoA + H(+). It functions in the pathway amino-acid biosynthesis; L-arginine biosynthesis; L-ornithine and N-acetyl-L-glutamate from L-glutamate and N(2)-acetyl-L-ornithine (cyclic): step 1/1. It participates in amino-acid biosynthesis; L-arginine biosynthesis; N(2)-acetyl-L-ornithine from L-glutamate: step 1/4. Catalyzes two activities which are involved in the cyclic version of arginine biosynthesis: the synthesis of N-acetylglutamate from glutamate and acetyl-CoA as the acetyl donor, and of ornithine by transacetylation between N(2)-acetylornithine and glutamate. The polypeptide is Arginine biosynthesis bifunctional protein ArgJ (Nocardia farcinica (strain IFM 10152)).